Consider the following 238-residue polypeptide: Anti-sigma-K factor RskA (238 aa).

The Cytoplasmic segment spans residues 1 to 97 (MTSPQNDLLS…RSSSRRRAAA (97 aa)). A helical transmembrane segment spans residues 98-118 (VLSAAAAVVIGLGTLAVGYAL). Topologically, residues 119–238 (RPAPTPSTAE…TPVFAELPLT (120 aa)) are extracellular.

It belongs to the anti-sigma-K factor family.

It localises to the cell membrane. Its function is as follows. An anti-sigma factor for extracytoplasmic function (ECF) sigma factor SigK. ECF sigma factors are held in an inactive form by an anti-sigma factor until released by regulated intramembrane proteolysis (RIP). RIP occurs when an extracytoplasmic signal triggers a concerted proteolytic cascade to transmit information and elicit cellular responses. The membrane-spanning regulatory substrate protein is first cut extracytoplasmically (site-1 protease, S1P), then within the membrane itself (site-2 protease, S2P, Rip1), while cytoplasmic proteases finish degrading the regulatory protein, liberating the sigma factor. The chain is Anti-sigma-K factor RskA (rskA) from Mycolicibacterium vanbaalenii (strain DSM 7251 / JCM 13017 / BCRC 16820 / KCTC 9966 / NRRL B-24157 / PYR-1) (Mycobacterium vanbaalenii).